The sequence spans 495 residues: Serine/threonine-protein kinase F (495 aa).

The Protein kinase domain occupies 46–314 (YLPVKLLGQG…ASAEEVLAVL (269 aa)). ATP contacts are provided by residues 52–60 (LGQGGFGAA) and lysine 77. Aspartate 187 acts as the Proton acceptor in catalysis. The segment at 316–354 (GGKGNQGKAPPGATVSTPQGTNTQIQPTPASSASPLTAP) is disordered. Residues 329–350 (TVSTPQGTNTQIQPTPASSASP) are compositionally biased toward polar residues.

It belongs to the protein kinase superfamily. Ser/Thr protein kinase family.

It carries out the reaction L-seryl-[protein] + ATP = O-phospho-L-seryl-[protein] + ADP + H(+). It catalyses the reaction L-threonyl-[protein] + ATP = O-phospho-L-threonyl-[protein] + ADP + H(+). The sequence is that of Serine/threonine-protein kinase F (spkF) from Synechocystis sp. (strain ATCC 27184 / PCC 6803 / Kazusa).